The primary structure comprises 246 residues: Allergin-1 (246 aa).

Residues 1–33 (MGDGDSPMCLSAVSFKGIRCWLDKLLLWALTIS) form the signal peptide. Topologically, residues 34 to 150 (ITLQNAAVDC…DESCPSCRLS (117 aa)) are extracellular. Residues 52-131 (PSPNLNSSMN…VNVSNLMKYS (80 aa)) enclose the Ig-like C2-type domain. N-linked (GlcNAc...) asparagine glycosylation occurs at N68. A disulfide bond links C73 and C120. Residues 151-171 (LLLPGLLLGILVIVLVLAYLI) form a helical membrane-spanning segment. Residues 172-246 (HLKYKKGKKT…ADYIYSELTH (75 aa)) are Cytoplasmic-facing. Short sequence motifs (ITIM motif) lie at residues 214–219 (IHYATP) and 239–244 (YIYSEL). Phosphotyrosine occurs at positions 216 and 241.

As to quaternary structure, monomer. Interacts (tyrosine-phosphorylated) with PTPN6, PTPN11 and INPP5D. N-glycosylated. Expressed in myeloid cells (dendritic cells, macrophages and neutrophils but not in T-cells, B-cells or natural killer cells) and mast cells (at protein level).

The protein resides in the cell membrane. It is found in the secreted. Its function is as follows. Immunoglobulin-like receptor which plays an inhibitory role in degranulation of mast cells. Negatively regulates IgE-mediated mast cell activation and suppresses the type I immediate hypersensitivity reaction. This is Allergin-1 (Milr1) from Mus musculus (Mouse).